The chain runs to 865 residues: Alanine--tRNA ligase (865 aa).

Histidine 552, histidine 556, cysteine 654, and histidine 658 together coordinate Zn(2+).

It belongs to the class-II aminoacyl-tRNA synthetase family. Requires Zn(2+) as cofactor.

It is found in the cytoplasm. The catalysed reaction is tRNA(Ala) + L-alanine + ATP = L-alanyl-tRNA(Ala) + AMP + diphosphate. In terms of biological role, catalyzes the attachment of alanine to tRNA(Ala) in a two-step reaction: alanine is first activated by ATP to form Ala-AMP and then transferred to the acceptor end of tRNA(Ala). Also edits incorrectly charged Ser-tRNA(Ala) and Gly-tRNA(Ala) via its editing domain. The sequence is that of Alanine--tRNA ligase from Coxiella burnetii (strain Dugway 5J108-111).